A 175-amino-acid chain; its full sequence is Transcription factor HES-3 (175 aa).

The region spanning 1-49 (MEKKRRARINLSLEQLRSLLERHYSHQIRKRKLEKADILELSVKYVRSL) is the bHLH domain. The Orange domain maps to 65–98 (YPSGFRGGLPGSSQRLRPGEDDSGLRCPLLLQRR). Positions 124–145 (PGPPAGGSQSPQSPFPPLGGLL) are enriched in low complexity. The disordered stretch occupies residues 124–175 (PGPPAGGSQSPQSPFPPLGGLLESSTGILAPPPASNCQAENPRPGFRVWRPW). A WRPW motif motif is present at residues 172–175 (WRPW).

In terms of assembly, transcription repression requires formation of a complex with a corepressor protein of the Groucho/TLE family. In terms of tissue distribution, expressed exclusively in Purkinje cells.

It is found in the nucleus. Functionally, transcriptional repressor of genes that require a bHLH protein for their transcription. This chain is Transcription factor HES-3 (Hes3), found in Rattus norvegicus (Rat).